We begin with the raw amino-acid sequence, 262 residues long: E3 ubiquitin-protein ligase NEURL3 (262 aa).

The NHR domain occupies 17-173; the sequence is ALRFHAEAKG…TTKAIELLDP (157 aa). Residues 202–241 form an RING-type zinc finger; the sequence is CAICFYHAANTRLVPCGHTYFCRYCAWRVFSDTAKCPVCR.

(Microbial infection) Interacts with hepatitis C virus protein E1; this interaction prevents E1 interaction with E2 and subsequently inhibits viral infection.

Its subcellular location is the cytoplasm. It catalyses the reaction S-ubiquitinyl-[E2 ubiquitin-conjugating enzyme]-L-cysteine + [acceptor protein]-L-lysine = [E2 ubiquitin-conjugating enzyme]-L-cysteine + N(6)-ubiquitinyl-[acceptor protein]-L-lysine.. Its pathway is protein modification; protein ubiquitination. E3 ubiquitin-protein ligase that plays a role in various biological processes such as lung development or innate immunity. Seems to utilize UBE2E1. Promotes innate antiviral response by catalyzing 'Lys-63'-linked ubiquitination of IRF7. Also inhibits hepatitis C virus assembly by directly binding to viral E1 envelope glycoprotein to disrupt its interaction with E2. Plays an essential role in TLR4-mediated activation of MAPK pathways by promoting 'Lys-48'-linked polyubiquitination of the phosphatase DUSP1/MKP1. The sequence is that of E3 ubiquitin-protein ligase NEURL3 (NEURL3) from Homo sapiens (Human).